Reading from the N-terminus, the 361-residue chain is MAGNSIGQHFRVTTFGESHGIALGCIVDGCPPGLEISEADLQTDLDRRRPGTSRYTTQRREPDEVKILSGVFEGKTTGTSIGLLIENTDQRSKDYSDIKDKFRPGHADYTYHQKYGIRDYRGGGRSSARETAMRVAAGAIAKKYLKQAFGVEIRAYLSQMGDVAIDKVDWNEIENNPFFCPDVDKVEAFDQLIRDLKKEGDSIGAKIQVVATNVPVGLGEPVFDRLDADIAHALMSINAVKGVEIGDGFDVVSQKGSQHRDTLSPQGFGSNHAGGILGGISTGQDIVANIALKPTSSITVPGDTINVDGESTQLITKGRHDPCVGIRAVPIAEAMLAIVVMDHLLRHRGQNHGVSTQTPKI.

Arg48 and Arg54 together coordinate NADP(+). Residues 125–127 (RSS), 238–239 (NA), Gly278, 293–297 (KPTSS), and Arg319 contribute to the FMN site.

The protein belongs to the chorismate synthase family. In terms of assembly, homotetramer. Requires FMNH2 as cofactor.

It catalyses the reaction 5-O-(1-carboxyvinyl)-3-phosphoshikimate = chorismate + phosphate. It participates in metabolic intermediate biosynthesis; chorismate biosynthesis; chorismate from D-erythrose 4-phosphate and phosphoenolpyruvate: step 7/7. Its function is as follows. Catalyzes the anti-1,4-elimination of the C-3 phosphate and the C-6 proR hydrogen from 5-enolpyruvylshikimate-3-phosphate (EPSP) to yield chorismate, which is the branch point compound that serves as the starting substrate for the three terminal pathways of aromatic amino acid biosynthesis. This reaction introduces a second double bond into the aromatic ring system. The protein is Chorismate synthase of Vibrio vulnificus (strain CMCP6).